Reading from the N-terminus, the 643-residue chain is Threonine--tRNA ligase (643 aa).

Residues 1–61 (MIKVTLKDGS…KEDVSLSICT (61 aa)) enclose the TGS domain. The interval 240 to 540 (DHNKLGRELK…LIEKYAGAFP (301 aa)) is catalytic. Positions 335, 386, and 517 each coordinate Zn(2+).

The protein belongs to the class-II aminoacyl-tRNA synthetase family. In terms of assembly, homodimer. Requires Zn(2+) as cofactor.

It localises to the cytoplasm. The enzyme catalyses tRNA(Thr) + L-threonine + ATP = L-threonyl-tRNA(Thr) + AMP + diphosphate + H(+). In terms of biological role, catalyzes the attachment of threonine to tRNA(Thr) in a two-step reaction: L-threonine is first activated by ATP to form Thr-AMP and then transferred to the acceptor end of tRNA(Thr). Also edits incorrectly charged L-seryl-tRNA(Thr). The protein is Threonine--tRNA ligase of Clostridium botulinum (strain Eklund 17B / Type B).